A 68-amino-acid chain; its full sequence is Guanine nucleotide-binding protein G(I)/G(S)/G(O) subunit gamma-5B (68 aa).

In terms of domain architecture, G protein gamma spans 3–68 (GFSSVAATKK…FRPQKVCSFL (66 aa)). Cys65 carries the cysteine methyl ester modification. Cys65 carries S-geranylgeranyl cysteine lipidation. Positions 66–68 (SFL) are cleaved as a propeptide — removed in mature form.

The protein belongs to the G protein gamma family. As to quaternary structure, g proteins are composed of 3 units; alpha, beta and gamma.

The protein localises to the cell membrane. Guanine nucleotide-binding proteins (G proteins) are involved as a modulator or transducer in various transmembrane signaling systems. The beta and gamma chains are required for the GTPase activity, for replacement of GDP by GTP, and for G protein-effector interaction. The polypeptide is Guanine nucleotide-binding protein G(I)/G(S)/G(O) subunit gamma-5B (Homo sapiens (Human)).